The sequence spans 123 residues: Sperm-associated antigen 11A (123 aa).

The N-terminal stretch at 1–25 is a signal peptide; it reads MRQRLLPSVTSLLLVALLFPGSSQA. N29 carries an N-linked (GlcNAc...) asparagine glycan.

This sequence belongs to the SPAG11 family.

The protein localises to the secreted. Its function is as follows. Has antimicrobial activity against E.coli. Plays a role in the defense response in the male reproductive tract, contributing to sperm maturation, storage and protection. The chain is Sperm-associated antigen 11A from Homo sapiens (Human).